Consider the following 700-residue polypeptide: DNA topoisomerase 1 (700 aa).

One can recognise a Toprim domain in the interval 3–114; sequence KNLIIVESPA…TLPRIVFHEI (112 aa). The Mg(2+) site is built by E9 and D83. Residues 130–553 form the Topo IA-type catalytic domain; it reads NMHSVNAQQT…EFYYPFMRKI (424 aa). The interaction with DNA stretch occupies residues 164–169; sequence SAGRVQ. The active-site O-(5'-phospho-DNA)-tyrosine intermediate is the Y298. 3 C4-type zinc fingers span residues 573–599, 629–656, and 669–692; these read CPDC…FPKC, CPSC…YPKC, and CEEC…CLKC.

The protein belongs to the type IA topoisomerase family. In terms of assembly, monomer. The cofactor is Mg(2+).

It catalyses the reaction ATP-independent breakage of single-stranded DNA, followed by passage and rejoining.. In terms of biological role, releases the supercoiling and torsional tension of DNA, which is introduced during the DNA replication and transcription, by transiently cleaving and rejoining one strand of the DNA duplex. Introduces a single-strand break via transesterification at a target site in duplex DNA. The scissile phosphodiester is attacked by the catalytic tyrosine of the enzyme, resulting in the formation of a DNA-(5'-phosphotyrosyl)-enzyme intermediate and the expulsion of a 3'-OH DNA strand. The free DNA strand then undergoes passage around the unbroken strand, thus removing DNA supercoils. Finally, in the religation step, the DNA 3'-OH attacks the covalent intermediate to expel the active-site tyrosine and restore the DNA phosphodiester backbone. This chain is DNA topoisomerase 1, found in Campylobacter jejuni subsp. jejuni serotype O:2 (strain ATCC 700819 / NCTC 11168).